The primary structure comprises 252 residues: Geranylgeranylglyceryl phosphate synthase (252 aa).

Residues aspartate 26 and serine 55 each coordinate Mg(2+). Sn-glycerol 1-phosphate-binding positions include 174 to 180 (YLEAGSG), 205 to 206 (GG), and 227 to 228 (GT).

The protein belongs to the GGGP/HepGP synthase family. Group II subfamily. Requires Mg(2+) as cofactor.

The protein localises to the cytoplasm. It catalyses the reaction sn-glycerol 1-phosphate + (2E,6E,10E)-geranylgeranyl diphosphate = sn-3-O-(geranylgeranyl)glycerol 1-phosphate + diphosphate. Its pathway is membrane lipid metabolism; glycerophospholipid metabolism. Functionally, prenyltransferase that catalyzes the transfer of the geranylgeranyl moiety of geranylgeranyl diphosphate (GGPP) to the C3 hydroxyl of sn-glycerol-1-phosphate (G1P). This reaction is the first ether-bond-formation step in the biosynthesis of archaeal membrane lipids. In Thermococcus gammatolerans (strain DSM 15229 / JCM 11827 / EJ3), this protein is Geranylgeranylglyceryl phosphate synthase.